A 708-amino-acid polypeptide reads, in one-letter code: Glycine--tRNA ligase beta subunit (708 aa).

It belongs to the class-II aminoacyl-tRNA synthetase family. As to quaternary structure, tetramer of two alpha and two beta subunits.

The protein localises to the cytoplasm. It catalyses the reaction tRNA(Gly) + glycine + ATP = glycyl-tRNA(Gly) + AMP + diphosphate. This chain is Glycine--tRNA ligase beta subunit, found in Paracidovorax citrulli (strain AAC00-1) (Acidovorax citrulli).